A 444-amino-acid chain; its full sequence is Deoxyguanosinetriphosphate triphosphohydrolase-like protein (444 aa).

The segment at methionine 1–glutamine 26 is disordered. Residues arginine 59–alanine 250 form the HD domain.

This sequence belongs to the dGTPase family. Type 2 subfamily.

This Shewanella woodyi (strain ATCC 51908 / MS32) protein is Deoxyguanosinetriphosphate triphosphohydrolase-like protein.